Consider the following 158-residue polypeptide: Cyclic pyranopterin monophosphate synthase (158 aa).

Residues 75–77 and 113–114 contribute to the substrate site; these read LCH and ME. Asp-128 is a catalytic residue.

The protein belongs to the MoaC family. In terms of assembly, homohexamer; trimer of dimers.

It carries out the reaction (8S)-3',8-cyclo-7,8-dihydroguanosine 5'-triphosphate = cyclic pyranopterin phosphate + diphosphate. Its pathway is cofactor biosynthesis; molybdopterin biosynthesis. Its function is as follows. Catalyzes the conversion of (8S)-3',8-cyclo-7,8-dihydroguanosine 5'-triphosphate to cyclic pyranopterin monophosphate (cPMP). The protein is Cyclic pyranopterin monophosphate synthase of Ralstonia nicotianae (strain ATCC BAA-1114 / GMI1000) (Ralstonia solanacearum).